The sequence spans 193 residues: NADH-ubiquinone oxidoreductase chain 2 (193 aa).

Transmembrane regions (helical) follow at residues 18-38, 39-59, 83-103, 116-138, and 161-181; these read FYST…KLGA, IFFL…FFLF, FFVL…GFFL, NLAF…LSTV, and LSFL…FFFL.

It localises to the mitochondrion inner membrane. The catalysed reaction is a ubiquinone + NADH + 5 H(+)(in) = a ubiquinol + NAD(+) + 4 H(+)(out). In terms of biological role, core subunit of the mitochondrial membrane respiratory chain NADH dehydrogenase (Complex I) that is believed to belong to the minimal assembly required for catalysis. Complex I functions in the transfer of electrons from NADH to the respiratory chain. The immediate electron acceptor for the enzyme is believed to be ubiquinone. This Paramecium tetraurelia protein is NADH-ubiquinone oxidoreductase chain 2 (ND2).